Reading from the N-terminus, the 193-residue chain is Phosphoheptose isomerase (193 aa).

The SIS domain occupies 37–193; it reads LANAFKAGGK…QLIEKEMADQ (157 aa). 52-54 serves as a coordination point for substrate; sequence NGG. Zn(2+) contacts are provided by His61 and Glu65. Substrate contacts are provided by residues Glu65, 93 to 94, 119 to 121, Ser124, and Gln172; these read ND and STS. Residues Gln172 and His180 each contribute to the Zn(2+) site.

It belongs to the SIS family. GmhA subfamily. As to quaternary structure, homotetramer. It depends on Zn(2+) as a cofactor.

The protein resides in the cytoplasm. It carries out the reaction 2 D-sedoheptulose 7-phosphate = D-glycero-alpha-D-manno-heptose 7-phosphate + D-glycero-beta-D-manno-heptose 7-phosphate. The protein operates within carbohydrate biosynthesis; D-glycero-D-manno-heptose 7-phosphate biosynthesis; D-glycero-alpha-D-manno-heptose 7-phosphate and D-glycero-beta-D-manno-heptose 7-phosphate from sedoheptulose 7-phosphate: step 1/1. Its function is as follows. Catalyzes the isomerization of sedoheptulose 7-phosphate in D-glycero-D-manno-heptose 7-phosphate. This chain is Phosphoheptose isomerase, found in Pectobacterium atrosepticum (strain SCRI 1043 / ATCC BAA-672) (Erwinia carotovora subsp. atroseptica).